The chain runs to 61 residues: Bowman-Birk type proteinase inhibitor (61 aa).

7 disulfides stabilise this stretch: Cys4/Cys57, Cys5/Cys20, Cys8/Cys53, Cys10/Cys18, Cys27/Cys34, Cys31/Cys46, and Cys36/Cys44.

It belongs to the Bowman-Birk serine protease inhibitor family.

Its function is as follows. Strong inhibitor of trypsin with a 1:1 stoichiometry. Weaker inhibitor of chymotrypsin. The polypeptide is Bowman-Birk type proteinase inhibitor (Erythrina variegata (Indian coral tree)).